A 392-amino-acid chain; its full sequence is Chorismate synthase (392 aa).

The NADP(+) site is built by arginine 40 and arginine 46. FMN-binding positions include 135–137, 256–257, glycine 300, 315–319, and arginine 341; these read RAS, QA, and KPIST.

Belongs to the chorismate synthase family. In terms of assembly, homotetramer. Requires FMNH2 as cofactor.

The catalysed reaction is 5-O-(1-carboxyvinyl)-3-phosphoshikimate = chorismate + phosphate. The protein operates within metabolic intermediate biosynthesis; chorismate biosynthesis; chorismate from D-erythrose 4-phosphate and phosphoenolpyruvate: step 7/7. Functionally, catalyzes the anti-1,4-elimination of the C-3 phosphate and the C-6 proR hydrogen from 5-enolpyruvylshikimate-3-phosphate (EPSP) to yield chorismate, which is the branch point compound that serves as the starting substrate for the three terminal pathways of aromatic amino acid biosynthesis. This reaction introduces a second double bond into the aromatic ring system. The polypeptide is Chorismate synthase (Acidothermus cellulolyticus (strain ATCC 43068 / DSM 8971 / 11B)).